The following is a 95-amino-acid chain: Putative pterin-4-alpha-carbinolamine dehydratase (95 aa).

Belongs to the pterin-4-alpha-carbinolamine dehydratase family.

The catalysed reaction is (4aS,6R)-4a-hydroxy-L-erythro-5,6,7,8-tetrahydrobiopterin = (6R)-L-erythro-6,7-dihydrobiopterin + H2O. This is Putative pterin-4-alpha-carbinolamine dehydratase from Solibacter usitatus (strain Ellin6076).